A 237-amino-acid chain; its full sequence is Small ribosomal subunit protein uS3 (237 aa).

The 69-residue stretch at 39 to 107 folds into the KH type-2 domain; sequence IRAYLMEELK…ETHLNIVEVR (69 aa). The segment at 213–237 is disordered; that stretch reads MASERRATESDNQGGSGRERRRENA.

Belongs to the universal ribosomal protein uS3 family. As to quaternary structure, part of the 30S ribosomal subunit. Forms a tight complex with proteins S10 and S14.

Its function is as follows. Binds the lower part of the 30S subunit head. Binds mRNA in the 70S ribosome, positioning it for translation. The polypeptide is Small ribosomal subunit protein uS3 (Rhizobium meliloti (strain 1021) (Ensifer meliloti)).